The sequence spans 311 residues: Cytochrome f (311 aa).

The signal sequence occupies residues 1-27 (MRRHLSLLIGSLVLGLSLLIAPAASWA). 4 residues coordinate heme: tyrosine 28, cysteine 48, cysteine 51, and histidine 52. A helical membrane pass occupies residues 277–297 (IYGLLAFFAAVALAQIMLVLK).

Belongs to the cytochrome f family. As to quaternary structure, the 4 large subunits of the cytochrome b6-f complex are cytochrome b6, subunit IV (17 kDa polypeptide, PetD), cytochrome f and the Rieske protein, while the 4 small subunits are PetG, PetL, PetM and PetN. The complex functions as a dimer. Requires heme as cofactor.

The protein resides in the cellular thylakoid membrane. In terms of biological role, component of the cytochrome b6-f complex, which mediates electron transfer between photosystem II (PSII) and photosystem I (PSI), cyclic electron flow around PSI, and state transitions. In Parasynechococcus marenigrum (strain WH8102), this protein is Cytochrome f.